We begin with the raw amino-acid sequence, 303 residues long: Ribosomal RNA small subunit methyltransferase A (303 aa).

Residues 1-19 (MSSRPPASFSATFSAARSS) show a composition bias toward low complexity. The segment at 1-34 (MSSRPPASFSATFSAARSSKCVPPPRRPSTDVSL) is disordered. Positions 55, 57, 82, 104, 130, and 149 each coordinate S-adenosyl-L-methionine.

It belongs to the class I-like SAM-binding methyltransferase superfamily. rRNA adenine N(6)-methyltransferase family. RsmA subfamily.

The protein localises to the cytoplasm. It carries out the reaction adenosine(1518)/adenosine(1519) in 16S rRNA + 4 S-adenosyl-L-methionine = N(6)-dimethyladenosine(1518)/N(6)-dimethyladenosine(1519) in 16S rRNA + 4 S-adenosyl-L-homocysteine + 4 H(+). Its function is as follows. Specifically dimethylates two adjacent adenosines (A1518 and A1519) in the loop of a conserved hairpin near the 3'-end of 16S rRNA in the 30S particle. May play a critical role in biogenesis of 30S subunits. The chain is Ribosomal RNA small subunit methyltransferase A from Gluconobacter oxydans (strain 621H) (Gluconobacter suboxydans).